The primary structure comprises 257 residues: tRNA pseudouridine synthase A (257 aa).

D43 functions as the Nucleophile in the catalytic mechanism. Residue Y94 participates in substrate binding.

The protein belongs to the tRNA pseudouridine synthase TruA family.

It carries out the reaction uridine(38/39/40) in tRNA = pseudouridine(38/39/40) in tRNA. In terms of biological role, formation of pseudouridine at positions 38, 39 and 40 in the anticodon stem and loop of transfer RNAs. The sequence is that of tRNA pseudouridine synthase A from Pyrobaculum calidifontis (strain DSM 21063 / JCM 11548 / VA1).